The following is a 122-amino-acid chain: Interferon alpha-inducible protein 27, mitochondrial (122 aa).

Residues 1 to 33 constitute a mitochondrion transit peptide; that stretch reads MEASALTSSAVTSVAKVVRVASGSAVVLPLARI. The chain crosses the membrane as a helical span at residues 34–57; it reads ATVVIGGVVAMAAVPMVLSAMGFT. Lys69 is covalently cross-linked (Glycyl lysine isopeptide (Lys-Gly) (interchain with G-Cter in ubiquitin)). The next 2 helical transmembrane spans lie at 71–91 and 99–119; these read MSAAAIANGGGVASGSLVATL and LSGLTKFILGSIGSAIAAVIA. The tract at residues 76–122 is mediates interaction with SKP2 and hepatitis C virus non-structural protein NS5A; that stretch reads IANGGGVASGSLVATLQSLGATGLSGLTKFILGSIGSAIAAVIARFY. The required for hepatitis C virus non-structural protein NS5A degradation stretch occupies residues 103–112; sequence TKFILGSIGS.

It belongs to the IFI6/IFI27 family. In terms of assembly, homodimer. Interacts with hepatitis C virus/HCV non-structural protein NS5A; promotes the ubiquitin-mediated proteasomal degradation of NS5A. Interacts with SKP2; promotes the ubiquitin-mediated proteasomal degradation of NS5A. Interacts with NR4A1. May interact with BCL2. Ubiquitinated by TRIM21 via 'Lys-6'-linked ubiquitin chains leading to IFI27 mitochondrial migration.

The protein localises to the mitochondrion membrane. It localises to the nucleus inner membrane. Its subcellular location is the endoplasmic reticulum membrane. In terms of biological role, probable adapter protein involved in different biological processes. Part of the signaling pathways that lead to apoptosis. Involved in type-I interferon-induced apoptosis characterized by a rapid and robust release of cytochrome C from the mitochondria and activation of BAX and caspases 2, 3, 6, 8 and 9. Also functions in TNFSF10-induced apoptosis. May also have a function in the nucleus, where it may be involved in the interferon-induced negative regulation of the transcriptional activity of NR4A1, NR4A2 and NR4A3 through the enhancement of XPO1-mediated nuclear export of these nuclear receptors. May thereby play a role in the vascular response to injury. In the innate immune response, has an antiviral activity towards hepatitis C virus/HCV. May prevent the replication of the virus by recruiting both the hepatitis C virus non-structural protein 5A/NS5A and the ubiquitination machinery via SKP2, promoting the ubiquitin-mediated proteasomal degradation of NS5A. Also promotes virus-induced pyroptosis by activating CASP3 in the mitochondria after 'Lys-6'-linked ubiquitination by TRIM21. This Homo sapiens (Human) protein is Interferon alpha-inducible protein 27, mitochondrial.